The sequence spans 603 residues: Elongation factor 4 (603 aa).

The region spanning 7-191 is the tr-type G domain; sequence SNIRNFSIVA…AIVTRLPPPK (185 aa). GTP contacts are provided by residues 19–24 and 138–141; these read DHGKST and NKVD.

The protein belongs to the TRAFAC class translation factor GTPase superfamily. Classic translation factor GTPase family. LepA subfamily.

The protein localises to the cell inner membrane. It catalyses the reaction GTP + H2O = GDP + phosphate + H(+). Required for accurate and efficient protein synthesis under certain stress conditions. May act as a fidelity factor of the translation reaction, by catalyzing a one-codon backward translocation of tRNAs on improperly translocated ribosomes. Back-translocation proceeds from a post-translocation (POST) complex to a pre-translocation (PRE) complex, thus giving elongation factor G a second chance to translocate the tRNAs correctly. Binds to ribosomes in a GTP-dependent manner. The sequence is that of Elongation factor 4 from Bradyrhizobium diazoefficiens (strain JCM 10833 / BCRC 13528 / IAM 13628 / NBRC 14792 / USDA 110).